The sequence spans 617 residues: Na(+)/H(+) antiporter NhaA 1 (617 aa).

Residues 1 to 433 (MTVTEQTTAR…GWAIFRITDW (433 aa)) form a na(+)/H(+) antiporter NhaA region. A run of 11 helical transmembrane segments spans residues 33–53 (AAALLLTFTVIAILWANSPWA), 75–95 (MTVKHLVNDALMTFFFFIVGL), 113–133 (AVPVVAAAAGLIVPAIVFLAF), 141–161 (HAWGVVISTDTAFLVGALAII), 171–191 (LFLLTLAVVDDVGALVAIAVF), 194–214 (DAIQVGPLVVAVAVLVALALV), 234–254 (VALYLAGIHPTLAGVAVALLI), 304–324 (VGPAVSFVILPLFALVNAGVL), 340–360 (WGVVAGLVIGKFVGITGATWL), 378–398 (IAGGAALSGIGFTISLFIVDI), and 411–431 (IGVLAASVLAFVFGWAIFRIT). The 184-residue stretch at 434-617 (LSPPEPVGLK…LIRALEAGRR (184 aa)) folds into the Thioredoxin domain.

The protein in the N-terminal section; belongs to the NhaA Na(+)/H(+) (TC 2.A.33) antiporter family.

It localises to the cell membrane. It carries out the reaction Na(+)(in) + 2 H(+)(out) = Na(+)(out) + 2 H(+)(in). Na(+)/H(+) antiporter that extrudes sodium in exchange for external protons. The polypeptide is Na(+)/H(+) antiporter NhaA 1 (Mycolicibacterium vanbaalenii (strain DSM 7251 / JCM 13017 / BCRC 16820 / KCTC 9966 / NRRL B-24157 / PYR-1) (Mycobacterium vanbaalenii)).